Here is a 385-residue protein sequence, read N- to C-terminus: Leucine aminopeptidase 1 (385 aa).

The first 19 residues, 1 to 19 (MKFPSFLSLGIAASTTALA), serve as a signal peptide directing secretion. Residues 20–87 (ALPDQKPIGD…FPRAFAKTAV (68 aa)) constitute a propeptide that is removed on maturation. Residue N177 is glycosylated (N-linked (GlcNAc...) asparagine). H185 and D204 together coordinate Zn(2+). N229 carries an N-linked (GlcNAc...) asparagine glycan. Zn(2+)-binding residues include E243 and D270. The cysteines at positions 319 and 323 are disulfide-linked. Residue H352 participates in Zn(2+) binding.

The protein belongs to the peptidase M28 family. M28E subfamily. As to quaternary structure, monomer. Zn(2+) serves as cofactor.

The protein localises to the secreted. Functionally, extracellular aminopeptidase that allows assimilation of proteinaceous substrates. The polypeptide is Leucine aminopeptidase 1 (LAP1) (Blastomyces gilchristii (strain SLH14081) (Blastomyces dermatitidis)).